A 176-amino-acid polypeptide reads, in one-letter code: DNA repair RAD52-like protein 1, mitochondrial (176 aa).

The N-terminal 37 residues, Met1–Phe37, are a transit peptide targeting the mitochondrion.

This sequence belongs to the RAD52 family. Interacts with WHY2. In terms of tissue distribution, expressed in root vascular tissue, tips of primary and secondary roots, young leaves, hydathodes, stomatal guard cells, cauline leaves, flower buds, stipules, carpels, pistils and anther filaments.

The protein localises to the mitochondrion. It localises to the nucleus. In terms of biological role, plant-specific single-stranded DNA-binding protein required for efficient heterologous recombination-dependent DNA repair in nuclear and mitochondrial compartments. Forms large nucleo-protein complexes with WHY2 in mitochondria. Binds ssDNA with high affinity, but with little sequence specificity. Involved in double-stranded DNA break repair. Involved in the hydrolytic splicing pathway in mitochondrion. Facilitates the excision of two cis-spliced group II introns, NAD1 intron 2 and NAD2 intron 1. This is DNA repair RAD52-like protein 1, mitochondrial from Arabidopsis thaliana (Mouse-ear cress).